A 162-amino-acid polypeptide reads, in one-letter code: Large ribosomal subunit protein uL10 (162 aa).

The protein belongs to the universal ribosomal protein uL10 family. As to quaternary structure, part of the ribosomal stalk of the 50S ribosomal subunit. The N-terminus interacts with L11 and the large rRNA to form the base of the stalk. The C-terminus forms an elongated spine to which L12 dimers bind in a sequential fashion forming a multimeric L10(L12)X complex.

Its function is as follows. Forms part of the ribosomal stalk, playing a central role in the interaction of the ribosome with GTP-bound translation factors. The sequence is that of Large ribosomal subunit protein uL10 from Borrelia duttonii (strain Ly).